A 32-amino-acid chain; its full sequence is Giant hemoglobin AIV chain (32 aa).

It belongs to the globin family. Giant hemoglobin is composed of four heme-containing chains (AI to AIV), and two linker chains (AV and AVI).

The sequence is that of Giant hemoglobin AIV chain from Lamellibrachia sp. (Deep-sea giant tube worm).